We begin with the raw amino-acid sequence, 356 residues long: MDLYPLVRPFLPLFTPEQAHGLSIRALKKGLVPADRSPADPVLRTRVWNIDFPNPVGLAAGFDKDAEIIDPLLSLGFGFVEAGSVTPRPQPGNPKPRLFRLDEDEGVINRFGFNSQGLAPFIYQLGKRKAAGLPGIVGANVGKNKETEDASEDYVAGVSATCRLADYIVCNVSSPNTPGLRLLQARTEMSALIGAALSARNDSLPDAATRPPLLVKVAPDLDDAGLEAVAEVTLELGVDGIIMGNTTISRPDSLRSRHKGETGGLSGAPLFTLSTERLGALYRLVRGRIPLVGAGGIASGADAYAKIRAGASLVQLYSALVFHGPALVPRIKADLAARLKADGFRSVADAVGADIR.

FMN is bound by residues 60–64 (AGFDK) and S84. A substrate-binding site is contributed by K64. 109–113 (NRFGF) is a substrate binding site. Residues N140 and N171 each contribute to the FMN site. N171 serves as a coordination point for substrate. S174 (nucleophile) is an active-site residue. Residue N176 coordinates substrate. The FMN site is built by K216 and G244. 245–246 (NT) contacts substrate. Residues G267, G296, and 317-318 (YS) each bind FMN.

This sequence belongs to the dihydroorotate dehydrogenase family. Type 2 subfamily. Monomer. Requires FMN as cofactor.

It localises to the cell membrane. The catalysed reaction is (S)-dihydroorotate + a quinone = orotate + a quinol. Its pathway is pyrimidine metabolism; UMP biosynthesis via de novo pathway; orotate from (S)-dihydroorotate (quinone route): step 1/1. In terms of biological role, catalyzes the conversion of dihydroorotate to orotate with quinone as electron acceptor. This is Dihydroorotate dehydrogenase (quinone) from Azorhizobium caulinodans (strain ATCC 43989 / DSM 5975 / JCM 20966 / LMG 6465 / NBRC 14845 / NCIMB 13405 / ORS 571).